We begin with the raw amino-acid sequence, 422 residues long: UDP-N-acetylglucosamine 1-carboxyvinyltransferase (422 aa).

22 to 23 (KN) serves as a coordination point for phosphoenolpyruvate. R95 contributes to the UDP-N-acetyl-alpha-D-glucosamine binding site. The active-site Proton donor is C119. C119 bears the 2-(S-cysteinyl)pyruvic acid O-phosphothioketal mark. UDP-N-acetyl-alpha-D-glucosamine-binding positions include 124–128 (RPIDQ), D309, and V331.

This sequence belongs to the EPSP synthase family. MurA subfamily.

Its subcellular location is the cytoplasm. It catalyses the reaction phosphoenolpyruvate + UDP-N-acetyl-alpha-D-glucosamine = UDP-N-acetyl-3-O-(1-carboxyvinyl)-alpha-D-glucosamine + phosphate. It participates in cell wall biogenesis; peptidoglycan biosynthesis. Its function is as follows. Cell wall formation. Adds enolpyruvyl to UDP-N-acetylglucosamine. The protein is UDP-N-acetylglucosamine 1-carboxyvinyltransferase of Anaeromyxobacter sp. (strain Fw109-5).